Reading from the N-terminus, the 218-residue chain is Chromophore lyase CpcT/CpeT 1 (218 aa).

Belongs to the CpcT/CpeT biliprotein lyase family.

Its function is as follows. Covalently attaches a chromophore to Cys residue(s) of phycobiliproteins. This Synechococcus sp. (strain JA-3-3Ab) (Cyanobacteria bacterium Yellowstone A-Prime) protein is Chromophore lyase CpcT/CpeT 1.